We begin with the raw amino-acid sequence, 283 residues long: Acetyl-coenzyme A carboxylase carboxyl transferase subunit beta (283 aa).

Residues 29–283 (LWVACPKCQQ…LKLHERGAHY (255 aa)) form the CoA carboxyltransferase N-terminal domain. The Zn(2+) site is built by cysteine 33, cysteine 36, cysteine 51, and cysteine 54. A C4-type zinc finger spans residues 33–54 (CPKCQQSIYHKDLGYYRTCPVC).

It belongs to the AccD/PCCB family. As to quaternary structure, acetyl-CoA carboxylase is a heterohexamer composed of biotin carboxyl carrier protein (AccB), biotin carboxylase (AccC) and two subunits each of ACCase subunit alpha (AccA) and ACCase subunit beta (AccD). The cofactor is Zn(2+).

It is found in the cytoplasm. The enzyme catalyses N(6)-carboxybiotinyl-L-lysyl-[protein] + acetyl-CoA = N(6)-biotinyl-L-lysyl-[protein] + malonyl-CoA. The protein operates within lipid metabolism; malonyl-CoA biosynthesis; malonyl-CoA from acetyl-CoA: step 1/1. Functionally, component of the acetyl coenzyme A carboxylase (ACC) complex. Biotin carboxylase (BC) catalyzes the carboxylation of biotin on its carrier protein (BCCP) and then the CO(2) group is transferred by the transcarboxylase to acetyl-CoA to form malonyl-CoA. This chain is Acetyl-coenzyme A carboxylase carboxyl transferase subunit beta, found in Latilactobacillus sakei subsp. sakei (strain 23K) (Lactobacillus sakei subsp. sakei).